The following is a 1017-amino-acid chain: Fanconi-associated nuclease 1 (1017 aa).

The segment covering 1–10 (MMSEGKPPDK) has biased composition (basic and acidic residues). Positions 1-23 (MMSEGKPPDKKRPRRSLSISKNK) are disordered. Over residues 11–23 (KRPRRSLSISKNK) the composition is skewed to basic residues. The D-box signature appears at 14-22 (RRSLSISKN). The UBZ4-type zinc-finger motif lies at 41–69 (KLACPVCSKMVPRYDLNRHLDEMCANNDF). Cys-44, Cys-47, His-59, and Cys-64 together coordinate Zn(2+). Disordered stretches follow at residues 95-121 (EDVT…KREV) and 170-189 (IDKD…STVV). Over residues 179–189 (SSPQSSKSTVV) the composition is skewed to polar residues. The residue at position 180 (Ser-180) is a Phosphoserine. A KEN box motif is present at residues 212–214 (KEN). Residues 671–696 (SRFVEILQRLHMYEEAVRELESLLSQ) are a coiled coil. Residues Glu-834, Asp-960, Glu-975, and Val-976 each coordinate Mn(2+). The 113-residue stretch at 895–1007 (EESLRAWVAA…GAEVEVCHVV (113 aa)) folds into the VRR-NUC domain.

It belongs to the FAN1 family. In terms of assembly, interacts with FANCD2 (when monoubiquitinated). Interacts with FANCI, MLH1, MLH3 and PMS2. Mn(2+) serves as cofactor. It depends on Mg(2+) as a cofactor. In terms of processing, ubiquitinated and degraded during mitotic exit by the APC/C-Cdh1 complex.

The protein resides in the nucleus. The catalysed reaction is Hydrolytically removes 5'-nucleotides successively from the 3'-hydroxy termini of 3'-hydroxy-terminated oligonucleotides.. Functionally, nuclease required for the repair of DNA interstrand cross-links (ICL) recruited at sites of DNA damage by monoubiquitinated FANCD2. Specifically involved in repair of ICL-induced DNA breaks by being required for efficient homologous recombination, probably in the resolution of homologous recombination intermediates. Not involved in DNA double-strand breaks resection. Acts as a 5'-3' exonuclease that anchors at a cut end of DNA and cleaves DNA successively at every third nucleotide, allowing to excise an ICL from one strand through flanking incisions. Probably keeps excising with 3'-flap annealing until it reaches and unhooks the ICL. Acts at sites that have a 5'-terminal phosphate anchor at a nick or a 1- or 2-nucleotide flap and is augmented by a 3' flap. Also has endonuclease activity toward 5'-flaps. This chain is Fanconi-associated nuclease 1, found in Homo sapiens (Human).